We begin with the raw amino-acid sequence, 92 residues long: Ribonuclease P protein component 1 (92 aa).

The protein belongs to the eukaryotic/archaeal RNase P protein component 1 family. Consists of a catalytic RNA component and at least 4-5 protein subunits.

It is found in the cytoplasm. The catalysed reaction is Endonucleolytic cleavage of RNA, removing 5'-extranucleotides from tRNA precursor.. Functionally, part of ribonuclease P, a protein complex that generates mature tRNA molecules by cleaving their 5'-ends. The protein is Ribonuclease P protein component 1 of Staphylothermus marinus (strain ATCC 43588 / DSM 3639 / JCM 9404 / F1).